The chain runs to 43 residues: Protein PsbN (43 aa).

The chain crosses the membrane as a helical span at residues 4–24; the sequence is AIVLIISVGAALVAVTGYGIY.

Belongs to the PsbN family.

The protein localises to the cellular thylakoid membrane. Its function is as follows. May play a role in photosystem I and II biogenesis. This is Protein PsbN from Trichormus variabilis (strain ATCC 29413 / PCC 7937) (Anabaena variabilis).